The chain runs to 230 residues: Cutinase (230 aa).

Residues 1–16 (MKFFALTTFLAATASA) form the signal peptide. Cysteine 47 and cysteine 125 are joined by a disulfide. Residue serine 136 is the Nucleophile of the active site. Residues cysteine 187 and cysteine 194 are joined by a disulfide bond. Residue aspartate 191 is part of the active site. Histidine 204 (proton donor/acceptor) is an active-site residue.

The protein belongs to the cutinase family. In terms of processing, the 2 disulfide bonds play a critical role in holding the catalytic residues in juxta-position; reduction of the disulfide bridges results in the complete inactivation of the enzyme.

The protein localises to the secreted. The catalysed reaction is cutin + H2O = cutin monomers.. Functionally, catalyzes the hydrolysis of complex carboxylic polyesters found in the cell wall of plants. Degrades cutin, a macromolecule that forms the structure of the plant cuticle. Allows pathogenic fungi to penetrate through the cuticular barrier into the host plant during the initial stage of fungal infection. This Fusarium solani subsp. cucurbitae (Neocosmosporum cucurbitae) protein is Cutinase (CUTA).